The chain runs to 98 residues: uncharacterized protein (98 aa).

Belongs to the Rv1128c/1148c/1588c/1702c/1945/3466 family.

This is an uncharacterized protein from Mycobacterium tuberculosis (strain ATCC 25618 / H37Rv).